The primary structure comprises 207 residues: Small ribosomal subunit protein uS4 (207 aa).

Residues 33-54 (KLDSKPGQHGRTSGARTSDYGN) form a disordered region. Over residues 42-53 (GRTSGARTSDYG) the composition is skewed to polar residues. Positions 97–160 (SRLDNVVYRM…KKQVRIAEAL (64 aa)) constitute an S4 RNA-binding domain.

This sequence belongs to the universal ribosomal protein uS4 family. In terms of assembly, part of the 30S ribosomal subunit. Contacts protein S5. The interaction surface between S4 and S5 is involved in control of translational fidelity.

In terms of biological role, one of the primary rRNA binding proteins, it binds directly to 16S rRNA where it nucleates assembly of the body of the 30S subunit. Functionally, with S5 and S12 plays an important role in translational accuracy. In Cupriavidus pinatubonensis (strain JMP 134 / LMG 1197) (Cupriavidus necator (strain JMP 134)), this protein is Small ribosomal subunit protein uS4.